The primary structure comprises 1966 residues: Probable serine/threonine-protein kinase vps15 (1966 aa).

The Protein kinase domain occupies 21–303 (IVFKKSLGNA…QYFSFAHQFI (283 aa)). Residues 27-35 (LGNARFLKT) and Lys49 contribute to the ATP site. Residue Asp144 is the Proton acceptor of the active site. Residues 362–407 (PILISNNNNNNNNNNNNNNNNNNNNNNNNNNNNNNNNNQTTTTTTN) are disordered. The span at 367–407 (NNNNNNNNNNNNNNNNNNNNNNNNNNNNNNNNNQTTTTTTN) shows a compositional bias: low complexity. HEAT repeat units lie at residues 558 to 596 (CRLQ…MVQT), 604 to 642 (IFGQ…TAKR), 717 to 754 (KTNE…VVGA), and 756 to 793 (SLES…LGLL). 4 disordered regions span residues 916–937 (SFNS…TGGS), 1036–1062 (SSSN…TNST), 1106–1130 (GGIT…TGLN), and 1190–1263 (TSLS…NNMN). Composition is skewed to low complexity over residues 1106–1119 (GGIT…TTLG) and 1192–1263 (LSNS…NNMN). WD repeat units lie at residues 1460 to 1499 (EHKA…KSVT), 1508 to 1547 (QQEG…KQKN), 1564 to 1605 (TTRG…DAFN), and 1610 to 1649 (ASLG…PLYS). The segment at 1699–1743 (RSYEQPPQQQPQQPQPPQQQQQQQSQMNRSINMTSSTTTTTTSSY) is disordered. Composition is skewed to low complexity over residues 1703 to 1722 (QPPQ…QQQQ) and 1732 to 1742 (TSSTTTTTTSS). WD repeat units lie at residues 1790–1829 (KPTP…QSYY) and 1935–1966 (HHQE…KVWK).

It belongs to the protein kinase superfamily. Ser/Thr protein kinase family.

The enzyme catalyses L-seryl-[protein] + ATP = O-phospho-L-seryl-[protein] + ADP + H(+). It carries out the reaction L-threonyl-[protein] + ATP = O-phospho-L-threonyl-[protein] + ADP + H(+). This Dictyostelium discoideum (Social amoeba) protein is Probable serine/threonine-protein kinase vps15 (vps15).